We begin with the raw amino-acid sequence, 283 residues long: uncharacterized protein (283 aa).

The first 25 residues, 1–25 (MNKKRLLFRTPLDALFLLFGTALSA), serve as a signal peptide directing secretion. C26 carries the N-palmitoyl cysteine lipid modification. The S-diacylglycerol cysteine moiety is linked to residue C26.

It belongs to the MG439/MG440 family.

Its subcellular location is the cell membrane. This is an uncharacterized protein from Mycoplasma pneumoniae (strain ATCC 29342 / M129 / Subtype 1) (Mycoplasmoides pneumoniae).